The primary structure comprises 396 residues: Penicillopepsin-1 (396 aa).

Residues Met1–Ala20 form the signal peptide. The propeptide at Ala21–Ala72 is activation peptide. In terms of domain architecture, Peptidase A1 spans Tyr88 to Ala393. Active-site residues include Asp104 and Asp285. An N-linked (GlcNAc...) asparagine glycan is attached at Asn311. A disulfide bridge connects residues Cys321 and Cys356.

This sequence belongs to the peptidase A1 family. In terms of assembly, monomer.

The protein resides in the secreted. It carries out the reaction Hydrolysis of proteins with broad specificity similar to that of pepsin A, preferring hydrophobic residues at P1 and P1', but also cleaving 20-Gly-|-Glu-21 in the B chain of insulin. Clots milk, and activates trypsinogen.. Functionally, secreted aspartic endopeptidase that allows assimilation of proteinaceous substrates. The scissile peptide bond is attacked by a nucleophilic water molecule activated by two aspartic residues in the active site. Shows a broad primary substrate specificity. Favors hydrophobic residues at the P1 and P1' positions, but can also activate trypsinogen and hydrolyze the B chain of insulin between positions 'Gly-20' and 'Glu-21'. This Penicillium rubens (strain ATCC 28089 / DSM 1075 / NRRL 1951 / Wisconsin 54-1255) (Penicillium chrysogenum) protein is Penicillopepsin-1 (pepA).